The primary structure comprises 392 residues: Ribonuclease D (392 aa).

Residues 12-178 (LIETTEALAA…PVYEGLRARL (167 aa)) form the 3'-5' exonuclease domain. In terms of domain architecture, HRDC spans 217–298 (NRRQLALVKA…ASTKAIPDAE (82 aa)).

This sequence belongs to the RNase D family. A divalent metal cation is required as a cofactor.

It localises to the cytoplasm. The catalysed reaction is Exonucleolytic cleavage that removes extra residues from the 3'-terminus of tRNA to produce 5'-mononucleotides.. In terms of biological role, exonuclease involved in the 3' processing of various precursor tRNAs. Initiates hydrolysis at the 3'-terminus of an RNA molecule and releases 5'-mononucleotides. The chain is Ribonuclease D from Acidiphilium cryptum (strain JF-5).